A 241-amino-acid polypeptide reads, in one-letter code: Ribonuclease PH (241 aa).

Phosphate-binding positions include arginine 87 and 125 to 127; that span reads GTR.

It belongs to the RNase PH family. In terms of assembly, homohexameric ring arranged as a trimer of dimers.

It carries out the reaction tRNA(n+1) + phosphate = tRNA(n) + a ribonucleoside 5'-diphosphate. Phosphorolytic 3'-5' exoribonuclease that plays an important role in tRNA 3'-end maturation. Removes nucleotide residues following the 3'-CCA terminus of tRNAs; can also add nucleotides to the ends of RNA molecules by using nucleoside diphosphates as substrates, but this may not be physiologically important. Probably plays a role in initiation of 16S rRNA degradation (leading to ribosome degradation) during starvation. The chain is Ribonuclease PH from Salinispora arenicola (strain CNS-205).